The primary structure comprises 175 residues: Apoptosis regulatory protein Siva (175 aa).

Tyr34 is modified (phosphotyrosine; by ABL2). Positions Gln36–Asp55 are interaction with BCL2L1 isoform Bcl-x(L) and inhibition of BCL2L1 anti-apoptotic activity. Ser70 bears the Phosphoserine mark. The segment at Asp105–Gly123 is interaction with coxsackievirus B3 VP2.

In terms of assembly, binds through its N-terminal region to the C-terminus of CD27 and to PXMP2/PMP22. Binds to the C-terminus of TNFRSF18/GITR. Isoform 1 binds to BCL2L1/BCLX isoform Bcl-x(L) but not to BAX. As to quaternary structure, (Microbial infection) Interacts with coxsackievirus B3 capsid protein VP2; this interaction inhibits the binding of SIVA1 to CD27. The cofactor is Zn(2+). In terms of processing, phosphorylated by ABL2/ARG in response to oxidative stress. In terms of tissue distribution, ubiquitous. Mostly expressed in thymus, testis, ovary, prostate, small intestine and spleen and less in colon.

It is found in the cytoplasm. The protein localises to the nucleus. Induces CD27-mediated apoptosis. Inhibits BCL2L1 isoform Bcl-x(L) anti-apoptotic activity. Inhibits activation of NF-kappa-B and promotes T-cell receptor-mediated apoptosis. The chain is Apoptosis regulatory protein Siva (SIVA1) from Homo sapiens (Human).